The sequence spans 55 residues: Eclosion hormone (55 aa).

It belongs to the insect eclosion hormone family.

It is found in the secreted. Neuropeptide that triggers the performance of ecdysis behaviors at the end of a molt. It triggers adult behavior patterns: larval, pupal and adult ecdysis, and plasticization during the molt. The sequence is that of Eclosion hormone from Romalea microptera (Eastern lubber grasshopper).